Reading from the N-terminus, the 247-residue chain is 3-deoxy-manno-octulosonate cytidylyltransferase (247 aa).

This sequence belongs to the KdsB family.

Its subcellular location is the cytoplasm. The enzyme catalyses 3-deoxy-alpha-D-manno-oct-2-ulosonate + CTP = CMP-3-deoxy-beta-D-manno-octulosonate + diphosphate. The protein operates within nucleotide-sugar biosynthesis; CMP-3-deoxy-D-manno-octulosonate biosynthesis; CMP-3-deoxy-D-manno-octulosonate from 3-deoxy-D-manno-octulosonate and CTP: step 1/1. It functions in the pathway bacterial outer membrane biogenesis; lipopolysaccharide biosynthesis. In terms of biological role, activates KDO (a required 8-carbon sugar) for incorporation into bacterial lipopolysaccharide in Gram-negative bacteria. The sequence is that of 3-deoxy-manno-octulosonate cytidylyltransferase from Chlorobium phaeovibrioides (strain DSM 265 / 1930) (Prosthecochloris vibrioformis (strain DSM 265)).